We begin with the raw amino-acid sequence, 319 residues long: Cytochrome f (319 aa).

The N-terminal stretch at 1–34 is a signal peptide; that stretch reads MQNRNTYEWAKKMTRLISVLVMIHIITRTSISNA. Heme contacts are provided by Tyr35, Cys55, Cys58, and His59. Residues 287 to 304 traverse the membrane as a helical segment; the sequence is GLLLFLASVILAQIFLVL.

This sequence belongs to the cytochrome f family. As to quaternary structure, the 4 large subunits of the cytochrome b6-f complex are cytochrome b6, subunit IV (17 kDa polypeptide, petD), cytochrome f and the Rieske protein, while the 4 small subunits are PetG, PetL, PetM and PetN. The complex functions as a dimer. The cofactor is heme.

It localises to the plastid. It is found in the chloroplast thylakoid membrane. In terms of biological role, component of the cytochrome b6-f complex, which mediates electron transfer between photosystem II (PSII) and photosystem I (PSI), cyclic electron flow around PSI, and state transitions. The chain is Cytochrome f (petA) from Pinus thunbergii (Japanese black pine).